We begin with the raw amino-acid sequence, 382 residues long: Lipid-A-disaccharide synthase (382 aa).

It belongs to the LpxB family.

It catalyses the reaction 2-N,3-O-bis[(3R)-3-hydroxytetradecanoyl]-alpha-D-glucosaminyl 1-phosphate + UDP-2-N,3-O-bis[(3R)-3-hydroxytetradecanoyl]-alpha-D-glucosamine = lipid A disaccharide (E. coli) + UDP + H(+). The enzyme catalyses a lipid X + a UDP-2-N,3-O-bis[(3R)-3-hydroxyacyl]-alpha-D-glucosamine = a lipid A disaccharide + UDP + H(+). Its pathway is glycolipid biosynthesis; lipid IV(A) biosynthesis; lipid IV(A) from (3R)-3-hydroxytetradecanoyl-[acyl-carrier-protein] and UDP-N-acetyl-alpha-D-glucosamine: step 5/6. Condensation of UDP-2,3-diacylglucosamine and 2,3-diacylglucosamine-1-phosphate to form lipid A disaccharide, a precursor of lipid A, a phosphorylated glycolipid that anchors the lipopolysaccharide to the outer membrane of the cell. This is Lipid-A-disaccharide synthase from Salmonella typhimurium (strain LT2 / SGSC1412 / ATCC 700720).